Consider the following 793-residue polypeptide: Methionine--tRNA ligase (793 aa).

The short motif at 11–21 (PYVNNFPHLGN) is the 'HIGH' region element. The Zn(2+) site is built by C142, C145, C155, and C158. Positions 334-338 (KFSKS) match the 'KMSKS' region motif. K337 contacts ATP. Basic and acidic residues predominate over residues 581 to 590 (SQKDRKKSEK). The disordered stretch occupies residues 581–610 (SQKDRKKSEKGCSACKDSGSSKSDAAASSA). Residues 591 to 610 (GCSACKDSGSSKSDAAASSA) are compositionally biased toward low complexity. Residues 622 to 727 (FSKKIALKTA…PWAAPGTPVI (106 aa)) enclose the tRNA-binding domain.

The protein belongs to the class-I aminoacyl-tRNA synthetase family. MetG type 1 subfamily. As to quaternary structure, homodimer. Zn(2+) is required as a cofactor.

It is found in the cytoplasm. It carries out the reaction tRNA(Met) + L-methionine + ATP = L-methionyl-tRNA(Met) + AMP + diphosphate. Its function is as follows. Is required not only for elongation of protein synthesis but also for the initiation of all mRNA translation through initiator tRNA(fMet) aminoacylation. This is Methionine--tRNA ligase from Treponema denticola (strain ATCC 35405 / DSM 14222 / CIP 103919 / JCM 8153 / KCTC 15104).